A 1414-amino-acid chain; its full sequence is Phenyloxazoline synthase MbtB (1414 aa).

In terms of domain architecture, Carrier 1 spans 5–78; the sequence is TACSEIIRAE…AWSQLVSAGT (74 aa). Ser-39 carries the O-(pantetheine 4'-phosphoryl)serine modification. Positions 96 to 394 are condensation/cyclization; that stretch reads EGEPFPLAPM…SSLLLDVDLT (299 aa). The tract at residues 579-975 is adenylation; it reads SYAQLRDQAS…RLPGVHAAAA (397 aa). One can recognise a Carrier 2 domain in the interval 1057-1135; the sequence is APRTVLQRAL…ALAQLLTGRE (79 aa). An O-(pantetheine 4'-phosphoryl)serine modification is found at Ser-1094. A thioesterase region spans residues 1188–1413; that stretch reads GAVLVFPHAG…AVARMVSADV (226 aa).

It belongs to the ATP-dependent AMP-binding enzyme family. MbtB subfamily. It depends on pantetheine 4'-phosphate as a cofactor. 4'-phosphopantetheine is transferred from CoA to a specific serine in each of the two carrier protein domains, leading to their activation from apo to holo forms.

It functions in the pathway siderophore biosynthesis; mycobactin biosynthesis. In terms of biological role, involved in the initial steps of the mycobactin biosynthetic pathway. Putatively couples activated salicylic acid with serine or threonine and cyclizes this precursor to the hydroxyphenyloxazoline ring system present in this class of siderophores. The protein is Phenyloxazoline synthase MbtB (mbtB) of Mycobacterium bovis (strain ATCC BAA-935 / AF2122/97).